The following is a 163-amino-acid chain: Large ribosomal subunit protein eL24y (163 aa).

Over residues 119–133 the composition is skewed to basic and acidic residues; that stretch reads IKKTKDEKKAKKVEF. Residues 119–163 are disordered; sequence IKKTKDEKKAKKVEFASKQQKVKANFPKAAAASKGPKVGGGGGKR.

The protein belongs to the eukaryotic ribosomal protein eL24 family. Interacts with REIL1 and REIL2. Component of the large ribosomal subunit. In terms of tissue distribution, ubiquitous.

It is found in the cytoplasm. The protein resides in the nucleus. Its subcellular location is the nucleolus. The protein localises to the nucleoplasm. Its function is as follows. Might have an extraribosomal function in reinitiation of translation of ETTIN and MONOPTEROS genes that are involved in the auxin-mediated gynoecium patterning. Essential in leaf polarity establishment, probably having a role for translation in leaf dorsoventral patterning to specify leaf adaxial identity. The protein is Large ribosomal subunit protein eL24y of Arabidopsis thaliana (Mouse-ear cress).